The sequence spans 620 residues: Chaperone protein HscA homolog (620 aa).

Belongs to the heat shock protein 70 family.

Chaperone involved in the maturation of iron-sulfur cluster-containing proteins. Has a low intrinsic ATPase activity which is markedly stimulated by HscB. The protein is Chaperone protein HscA homolog of Pseudomonas syringae pv. syringae (strain B728a).